A 46-amino-acid polypeptide reads, in one-letter code: Esculentin-1 (46 aa).

Cys40 and Cys46 are joined by a disulfide.

As to expression, expressed by the skin glands.

The protein resides in the secreted. In terms of biological role, antimicrobial peptide. Stimulates insulin release by BRIN-BD11 cells in vitro. In Pelophylax saharicus (Sahara frog), this protein is Esculentin-1.